The primary structure comprises 734 residues: Photosystem I P700 chlorophyll a apoprotein A2 (734 aa).

Transmembrane regions (helical) follow at residues 46 to 69 (IFASHFGQLAIIFLWTSGNLFHVA), 135 to 158 (LYTGALFLFLISAISLIAGWLHLQ), 175 to 199 (LNHHLAGLFGVSSLAWTGHLVHVAI), 273 to 291 (IAHHHLAITLLFFVAGHMY), 330 to 353 (LHFQLGLALASLGVFTSLVAQHMY), 369 to 395 (AALYAHHQYIAGFIMTGAFAHGAIFFI), 417 to 439 (AIISHLSWVSLFLGFHTLGLYIH), and 517 to 535 (FLVHHAIALGLHTTTLILV). [4Fe-4S] cluster is bound by residues C559 and C568. A run of 2 helical transmembrane segments spans residues 575-596 (AFYLAVFWMLNTIGWVTFYWHW) and 643-665 (LSVWAWMFLFGHLVWATGFMFLI). Residues H654, M662, and Y670 each coordinate chlorophyll a. Residue W671 participates in phylloquinone binding. The chain crosses the membrane as a helical span at residues 707 to 727 (FVGLAHFSVGYIFTYAAFLIA).

Belongs to the PsaA/PsaB family. In terms of assembly, the PsaA/B heterodimer binds the P700 chlorophyll special pair and subsequent electron acceptors. PSI consists of a core antenna complex that captures photons, and an electron transfer chain that converts photonic excitation into a charge separation. The eukaryotic PSI reaction center is composed of at least 11 subunits. Requires P700 is a chlorophyll a/chlorophyll a' dimer, A0 is one or more chlorophyll a, A1 is one or both phylloquinones and FX is a shared 4Fe-4S iron-sulfur center. as cofactor.

The protein resides in the plastid membrane. It catalyses the reaction reduced [plastocyanin] + hnu + oxidized [2Fe-2S]-[ferredoxin] = oxidized [plastocyanin] + reduced [2Fe-2S]-[ferredoxin]. In terms of biological role, psaA and PsaB bind P700, the primary electron donor of photosystem I (PSI), as well as the electron acceptors A0, A1 and FX. PSI is a plastocyanin-ferredoxin oxidoreductase, converting photonic excitation into a charge separation, which transfers an electron from the donor P700 chlorophyll pair to the spectroscopically characterized acceptors A0, A1, FX, FA and FB in turn. Oxidized P700 is reduced on the lumenal side of the thylakoid membrane by plastocyanin. The protein is Photosystem I P700 chlorophyll a apoprotein A2 of Cuscuta sandwichiana (Kauna'oa).